We begin with the raw amino-acid sequence, 480 residues long: G-rich sequence factor 1 (480 aa).

Residues 1–117 (MAGTRWVLGA…AAAAVPTRSY (117 aa)) constitute a mitochondrion transit peptide. 2 RRM domains span residues 122–246 (KTTY…SSPV) and 250–326 (GVVR…PSRR). The residue at position 244 (Ser-244) is a Phosphoserine. A Phosphoserine modification is found at Ser-335. The RRM 3 domain maps to 401-480 (HFVHMRGLPF…LFLNSCPKGK (80 aa)).

Monomer. Found in a complex with DDX28, DHX30, FASTKD2 and FASTKD5. Interacts with the mitochondrial RNase P complex subunit TRMT10C/MRPP1. Interacts with the 2 components of the mitochondrial degradosome complex, PNPT1 and SUPV3L1, in an RNA-dependent manner.

Its subcellular location is the mitochondrion matrix. The protein resides in the cytoplasm. In terms of biological role, regulator of post-transcriptional mitochondrial gene expression, required for assembly of the mitochondrial ribosome and for recruitment of mRNA and lncRNA. Binds RNAs containing the 14 base G-rich element. Preferentially binds RNAs transcribed from three contiguous genes on the light strand of mtDNA, the ND6 mRNA, and the long non-coding RNAs for MT-CYB and MT-ND5, each of which contains multiple consensus binding sequences. Involved in the degradosome-mediated decay of non-coding mitochondrial transcripts (MT-ncRNA) and tRNA-like molecules. Acts by unwinding G-quadruplex RNA structures in MT-ncRNA, thus facilitating their degradation by the degradosome. G-quadruplexes (G4) are non-canonical 4 stranded structures formed by transcripts from the light strand of mtDNA. This is G-rich sequence factor 1 (GRSF1) from Homo sapiens (Human).